The following is a 161-amino-acid chain: UPF0262 protein Meso_0189 (161 aa).

Belongs to the UPF0262 family.

This chain is UPF0262 protein Meso_0189, found in Chelativorans sp. (strain BNC1).